The chain runs to 482 residues: Ubiquitin carboxyl-terminal hydrolase MINDY-1 (482 aa).

Residues 1–119 (MEQPQAECPA…RPQQLPQSPR (119 aa)) form a disordered region. The segment covering 21-66 (ESEKHEALSGPEKHPQDKDGADAAPEKHPQDKDGADAHGEAGKQKS) has biased composition (basic and acidic residues). Positions 82-94 (CPPPEASSSPPGP) are enriched in pro residues. Polar residues predominate over residues 106–119 (EACSRPQQLPQSPR). At Ser-117 the chain carries Phosphoserine. The active-site Nucleophile is Cys-151. The active-site Proton acceptor is the His-333. Residues 402-441 (QVDQDYLIALSLQQQQQPQGMLGLSDLELAQQLQQEEYQQ) are ubiquitin-binding domain (UBD). The span at 437 to 446 (EEYQQQQAVQ) shows a compositional bias: low complexity. The interval 437–482 (EEYQQQQAVQPVRTRAPSSPGRGATSGRPAGERRQRSKTESDCVLL) is disordered. Ser-454 carries the phosphoserine modification. Over residues 466–482 (AGERRQRSKTESDCVLL) the composition is skewed to basic and acidic residues.

Belongs to the MINDY deubiquitinase family. FAM63 subfamily.

It carries out the reaction Thiol-dependent hydrolysis of ester, thioester, amide, peptide and isopeptide bonds formed by the C-terminal Gly of ubiquitin (a 76-residue protein attached to proteins as an intracellular targeting signal).. In terms of biological role, hydrolase that can specifically remove 'Lys-48'-linked conjugated ubiquitin from proteins. Has exodeubiquitinase activity and has a preference for long polyubiquitin chains. May play a regulatory role at the level of protein turnover. The chain is Ubiquitin carboxyl-terminal hydrolase MINDY-1 (Mindy1) from Rattus norvegicus (Rat).